Here is a 491-residue protein sequence, read N- to C-terminus: 2,3-bisphosphoglycerate-independent phosphoglycerate mutase (491 aa).

Asp11 and Ser61 together coordinate Mn(2+). Ser61 serves as the catalytic Phosphoserine intermediate. Substrate-binding positions include His118, 147-148, Arg177, Arg183, 248-251, and Lys320; these read RD and RSDR. Residues Asp386, His390, Asp427, His428, and His445 each coordinate Mn(2+).

Belongs to the BPG-independent phosphoglycerate mutase family. As to quaternary structure, monomer. It depends on Mn(2+) as a cofactor.

It carries out the reaction (2R)-2-phosphoglycerate = (2R)-3-phosphoglycerate. Its pathway is carbohydrate degradation; glycolysis; pyruvate from D-glyceraldehyde 3-phosphate: step 3/5. Functionally, catalyzes the interconversion of 2-phosphoglycerate and 3-phosphoglycerate. This Sulfurimonas denitrificans (strain ATCC 33889 / DSM 1251) (Thiomicrospira denitrificans (strain ATCC 33889 / DSM 1251)) protein is 2,3-bisphosphoglycerate-independent phosphoglycerate mutase.